A 208-amino-acid polypeptide reads, in one-letter code: Predicted GPI-anchored protein 37 (208 aa).

An N-terminal signal peptide occupies residues 1-18; that stretch reads MLFTQLIILLTVTSQALS. The tract at residues 33–93 is disordered; that stretch reads TKRLGGGSRG…SSSSSGSRNW (61 aa). The segment covering 36-53 has biased composition (gly residues); the sequence is LGGGSRGGSSSGSRGGSS. Over residues 54–63 the composition is skewed to low complexity; sequence SGSSSGSSSG. N-linked (GlcNAc...) asparagine glycosylation is present at Asn173. Ser185 is lipidated: GPI-anchor amidated serine. Residues 186 to 208 constitute a propeptide, removed in mature form; that stretch reads SSLNIPSTHFYLIGFAAAYSIVL.

This sequence belongs to the PGA37 family.

The protein localises to the cell membrane. Functionally, predicted GPI-anchored protein which may have a role during host infection. The sequence is that of Predicted GPI-anchored protein 37 (PGA37) from Candida albicans (strain SC5314 / ATCC MYA-2876) (Yeast).